Consider the following 393-residue polypeptide: Interferon regulatory factor 9 (393 aa).

The IRF tryptophan pentad repeat DNA-binding region spans 9–116 (TRKLRNWVVE…EPYKVYQLLP (108 aa)). 2 disordered regions span residues 120–151 (VSGQ…AMQN) and 163–202 (LNNE…APFQ). A Phosphoserine modification is found at serine 139.

This sequence belongs to the IRF family. As to quaternary structure, interacts with STAT2 in the cytoplasm. Forms the interferon-stimulated gene factor 3 complex (ISGF3) with the heterodimer STAT1:STAT2; upon stimulation. (Microbial infection) Interacts with measles virus V protein; this interaction prevents the binding of IRF9 to STAT2 and thereby the type I interferon signaling pathway. Post-translationally, (Microbial infection) Ubiquitinated by Herpes simplex virus 2 E3 ubiquitin ligase ICP22.

It localises to the cytoplasm. The protein localises to the nucleus. Its function is as follows. Transcription factor that plays an essential role in anti-viral immunity. It mediates signaling by type I IFNs (IFN-alpha and IFN-beta). Following type I IFN binding to cell surface receptors, Jak kinases (TYK2 and JAK1) are activated, leading to tyrosine phosphorylation of STAT1 and STAT2. IRF9/ISGF3G associates with the phosphorylated STAT1:STAT2 dimer to form a complex termed ISGF3 transcription factor, that enters the nucleus. ISGF3 binds to the IFN stimulated response element (ISRE) to activate the transcription of interferon stimulated genes, which drive the cell in an antiviral state. This Homo sapiens (Human) protein is Interferon regulatory factor 9 (IRF9).